A 316-amino-acid polypeptide reads, in one-letter code: Acetyl-coenzyme A carboxylase carboxyl transferase subunit alpha (316 aa).

One can recognise a CoA carboxyltransferase C-terminal domain in the interval 40–290 (KARKELQRIY…RERFAHHLQE (251 aa)).

It belongs to the AccA family. Acetyl-CoA carboxylase is a heterohexamer composed of biotin carboxyl carrier protein (AccB), biotin carboxylase (AccC) and two subunits each of ACCase subunit alpha (AccA) and ACCase subunit beta (AccD).

It is found in the cytoplasm. It carries out the reaction N(6)-carboxybiotinyl-L-lysyl-[protein] + acetyl-CoA = N(6)-biotinyl-L-lysyl-[protein] + malonyl-CoA. The protein operates within lipid metabolism; malonyl-CoA biosynthesis; malonyl-CoA from acetyl-CoA: step 1/1. Functionally, component of the acetyl coenzyme A carboxylase (ACC) complex. First, biotin carboxylase catalyzes the carboxylation of biotin on its carrier protein (BCCP) and then the CO(2) group is transferred by the carboxyltransferase to acetyl-CoA to form malonyl-CoA. The chain is Acetyl-coenzyme A carboxylase carboxyl transferase subunit alpha from Acidithiobacillus ferrooxidans (strain ATCC 23270 / DSM 14882 / CIP 104768 / NCIMB 8455) (Ferrobacillus ferrooxidans (strain ATCC 23270)).